Here is a 303-residue protein sequence, read N- to C-terminus: tRNA pseudouridine synthase B (303 aa).

Aspartate 46 serves as the catalytic Nucleophile.

The protein belongs to the pseudouridine synthase TruB family. Type 1 subfamily.

It carries out the reaction uridine(55) in tRNA = pseudouridine(55) in tRNA. Functionally, responsible for synthesis of pseudouridine from uracil-55 in the psi GC loop of transfer RNAs. In Hydrogenovibrio crunogenus (strain DSM 25203 / XCL-2) (Thiomicrospira crunogena), this protein is tRNA pseudouridine synthase B.